Here is a 400-residue protein sequence, read N- to C-terminus: Eukaryotic translation initiation factor 3 subunit M (400 aa).

Residues 180 to 354 (LIAKIYSALV…QSFAVHRAQK (175 aa)) form the PCI domain.

Belongs to the eIF-3 subunit M family. Component of the eukaryotic translation initiation factor 3 (eIF-3) complex.

Its subcellular location is the cytoplasm. Functionally, component of the eukaryotic translation initiation factor 3 (eIF-3) complex, which is involved in protein synthesis of a specialized repertoire of mRNAs and, together with other initiation factors, stimulates binding of mRNA and methionyl-tRNAi to the 40S ribosome. The eIF-3 complex specifically targets and initiates translation of a subset of mRNAs involved in cell proliferation. In Yarrowia lipolytica (strain CLIB 122 / E 150) (Yeast), this protein is Eukaryotic translation initiation factor 3 subunit M.